Consider the following 272-residue polypeptide: HMP-PP phosphatase (272 aa).

The Nucleophile role is filled by aspartate 8. Aspartate 8, aspartate 10, and aspartate 212 together coordinate Mg(2+).

Belongs to the HAD-like hydrolase superfamily. Cof family. Mg(2+) is required as a cofactor.

The catalysed reaction is 4-amino-2-methyl-5-(diphosphooxymethyl)pyrimidine + H2O = 4-amino-2-methyl-5-(phosphooxymethyl)pyrimidine + phosphate + H(+). Functionally, catalyzes the hydrolysis of 4-amino-2-methyl-5-hydroxymethylpyrimidine pyrophosphate (HMP-PP) to 4-amino-2-methyl-5-hydroxymethylpyrimidine phosphate (HMP-P). This chain is HMP-PP phosphatase, found in Salmonella enteritidis PT4 (strain P125109).